Here is a 244-residue protein sequence, read N- to C-terminus: Large ribosomal subunit protein bL25 (244 aa).

Residues 197–244 form a disordered region; it reads ADVEAEAAEAALAKEAATEAAEEEETEKPASEAEASGEAEQADTDKKE. Residues 204–215 are compositionally biased toward low complexity; the sequence is AEAALAKEAATE.

The protein belongs to the bacterial ribosomal protein bL25 family. CTC subfamily. In terms of assembly, part of the 50S ribosomal subunit; part of the 5S rRNA/L5/L18/L25 subcomplex. Contacts the 5S rRNA. Binds to the 5S rRNA independently of L5 and L18.

Functionally, this is one of the proteins that binds to the 5S RNA in the ribosome where it forms part of the central protuberance. This Coxiella burnetii (strain CbuK_Q154) (Coxiella burnetii (strain Q154)) protein is Large ribosomal subunit protein bL25.